The sequence spans 1064 residues: Fibropellin-1 (1064 aa).

A signal peptide spans 1 to 19 (MRTWLLAVLLLSVIAVTYG). An EGF-like 1 domain is found at 20 to 55 (QGECDSDPCENGSTCQEGEGSYICQCPMGYDGQNCD). Intrachain disulfides connect Cys-23–Cys-34, Cys-28–Cys-43, Cys-45–Cys-54, and Cys-62–Cys-88. Residue Asn-30 is glycosylated (N-linked (GlcNAc...) asparagine). The region spanning 62–175 (CGYNVFDANG…NRGFRITFSS (114 aa)) is the CUB domain. Residue Asn-136 is glycosylated (N-linked (GlcNAc...) asparagine). Positions 176 to 212 (DGDDCDPNLCQNGAACTDLVNDYACTCPPGFTGRNCE) constitute an EGF-like 2; calcium-binding domain. Disulfide bonds link Cys-180–Cys-191, Cys-185–Cys-200, Cys-202–Cys-211, Cys-218–Cys-229, Cys-223–Cys-238, Cys-240–Cys-249, Cys-256–Cys-267, Cys-261–Cys-276, Cys-278–Cys-287, Cys-294–Cys-305, Cys-299–Cys-314, Cys-316–Cys-325, Cys-332–Cys-343, Cys-337–Cys-352, Cys-354–Cys-363, Cys-370–Cys-381, Cys-375–Cys-390, Cys-392–Cys-401, Cys-408–Cys-419, Cys-413–Cys-428, Cys-430–Cys-439, Cys-446–Cys-457, Cys-451–Cys-466, Cys-468–Cys-477, Cys-484–Cys-495, Cys-489–Cys-504, Cys-506–Cys-515, Cys-522–Cys-533, Cys-527–Cys-542, Cys-544–Cys-553, Cys-560–Cys-571, Cys-565–Cys-580, Cys-582–Cys-591, Cys-598–Cys-609, Cys-603–Cys-618, Cys-620–Cys-629, Cys-636–Cys-647, Cys-641–Cys-656, Cys-658–Cys-667, Cys-674–Cys-685, Cys-679–Cys-694, Cys-696–Cys-705, Cys-712–Cys-723, Cys-717–Cys-732, Cys-734–Cys-743, Cys-750–Cys-761, Cys-755–Cys-770, Cys-772–Cys-781, Cys-788–Cys-799, Cys-793–Cys-808, Cys-810–Cys-819, Cys-826–Cys-837, Cys-831–Cys-846, Cys-848–Cys-857, Cys-864–Cys-875, Cys-869–Cys-884, Cys-886–Cys-895, Cys-902–Cys-913, Cys-907–Cys-922, Cys-924–Cys-933, and Cys-939–Cys-1015. One can recognise an EGF-like 3; calcium-binding domain in the interval 214–250 (DIDECASDPCQNGGACVDGVNGYVCNCVPGFDGDECE). The EGF-like 4; calcium-binding domain occupies 252–288 (NINECASSPCLNGGICVDGVNMFECTCLAGFTGVRCE). One can recognise an EGF-like 5; calcium-binding domain in the interval 290–326 (NIDECASAPCQNGGICIDGINGYTCSCPLGFSGDNCE). The EGF-like 6; calcium-binding domain occupies 328–364 (NDDECSSIPCLNGGTCVDLVNAYMCVCAPGWTGPTCA). The region spanning 366 to 402 (NIDECASAPCQNGGVCIDGVNGYMCDCQPGYTGTHCE) is the EGF-like 7; calcium-binding domain. The 37-residue stretch at 404-440 (DIDECARPPCQNGGDCVDGVNGYVCICAPGFDGLNCE) folds into the EGF-like 8; calcium-binding domain. An EGF-like 9; calcium-binding domain is found at 442–478 (NIDECASRPCQNGAVCVDGVNGFVCTCSAGYTGVLCE). One can recognise an EGF-like 10; calcium-binding domain in the interval 480-516 (DINECASMPCLNGGVCTDLVNGYICTCAAGFEGTNCE). In terms of domain architecture, EGF-like 11; calcium-binding spans 518–554 (DTDECASFPCQNGATCTDQVNGYVCTCVPGYTGVLCE). In terms of domain architecture, EGF-like 12; calcium-binding spans 556–592 (DINECASFPCLNGGTCNDQVNGYVCVCAQDTSVSTCE). The EGF-like 13; calcium-binding domain maps to 594–630 (DRDECASAPCLNGGACMDVVNGFVCTCLPGWEGTNCE). The 37-residue stretch at 632–668 (NTDECASSPCMNGGLCVDQVNSYVCFCLPGFTGIHCG) folds into the EGF-like 14; calcium-binding domain. The 37-residue stretch at 670 to 706 (EIDECASSPCLNGGQCIDRVDSYECVCAAGYTAVRCQ) folds into the EGF-like 15; calcium-binding domain. Residues 708-744 (NIDECASAPCQNGGVCVDGVNGYVCNCAPGYTGDNCE) form the EGF-like 16; calcium-binding domain. Residues 746-782 (EIDECASMPCLNGGACIEMVNGYTCQCVAGYTGVICE) enclose the EGF-like 17; calcium-binding domain. In terms of domain architecture, EGF-like 18; calcium-binding spans 784–820 (DIDECASAPCQNGGVCTDTINGYICACVPGFTGSNCE). One can recognise an EGF-like 19; calcium-binding domain in the interval 822–858 (NIDECASDPCLNGGICVDGVNGFVCQCPPNYSGTYCE). Asn-851 is a glycosylation site (N-linked (GlcNAc...) asparagine). In terms of domain architecture, EGF-like 20 spans 860-896 (SLDACRSMPCQNGATCVNVGADYVCECVPGYAGQNCE). The region spanning 898-934 (DINECASLPCQNGGLCIDGIAGYTCQCRLGYIGVNCE) is the EGF-like 21; calcium-binding domain. The Avidin-like domain maps to 937 to 1056 (GFCDLEGMWY…GQDKWTRYEQ (120 aa)).

As to quaternary structure, homotetramer.

The protein localises to the secreted. Its subcellular location is the extracellular space. It localises to the cytoplasmic vesicle. The protein resides in the extracellular matrix. It is found in the hyaline layer. The protein localises to the apical lamina. In terms of biological role, forms the apical lamina, a component of the extracellular matrix. This Strongylocentrotus purpuratus (Purple sea urchin) protein is Fibropellin-1 (EGF1).